Reading from the N-terminus, the 370-residue chain is L-lactate oxidase (370 aa).

An FMN hydroxy acid dehydrogenase domain is found at 8-367 (DPDGMPVTLS…TPDLLTGFSG (360 aa)). A pyruvate-binding site is contributed by Y34. Residues 87–89 (PMA), S116, and Q136 each bind FMN. Y138 serves as a coordination point for pyruvate. An FMN-binding site is contributed by T164. R173 contributes to the pyruvate binding site. Residues K238 and S260 each contribute to the FMN site. 2 residues coordinate pyruvate: H262 and R265. H262 serves as the catalytic Proton acceptor. Residues 293-297 (DGGIR) and R317 contribute to the FMN site.

This sequence belongs to the FMN-dependent alpha-hydroxy acid dehydrogenase family. As to quaternary structure, homotetramer. It depends on FMN as a cofactor.

It catalyses the reaction (S)-lactate + O2 = pyruvate + H2O2. It carries out the reaction a (2S)-2-hydroxycarboxylate + O2 = a 2-oxocarboxylate + H2O2. The catalysed reaction is glycolate + O2 = glyoxylate + H2O2. The enzyme catalyses 2-hydroxyoctadecanoate + O2 = 2-oxooctadecanoate + H2O2. In terms of biological role, catalyzes the oxidation of (S)-lactate (L-lactate) to pyruvate, with a reduction of O2 to H2O2. Is also able to use glycolate and to a lesser extent 2-hydroxyoctadecanoate as substrate. This Roseobacter sp. (strain GAI101) protein is L-lactate oxidase.